A 282-amino-acid chain; its full sequence is E3 ubiquitin-protein ligase RNF217 (282 aa).

Residues 1-218 (MSCRVCLEDR…LSIFGCKYRY (218 aa)) form a TRIAD supradomain region. Zn(2+) is bound by residues Cys-3, Cys-6, Cys-23, Cys-26, Cys-123, Cys-126, His-131, Cys-136, Cys-163, and Cys-166. Residues 3–49 (CRVCLEDRSIKPLPCCKKPVCDECLKRYLSSQVQLGQAEIQCPITEC) form an RING-type 1 zinc finger. An IBR-type zinc finger spans residues 68 to 136 (IKYKYFLELS…HAPWHEGVNC (69 aa)). The segment at 163–192 (CPRCKVHIQRTEGCDHMTCSQCNTNFCYRC) adopts an RING-type 2; atypical zinc-finger fold. Residue Cys-176 is part of the active site. Zn(2+) is bound by residues Cys-181, Cys-184, Cys-189, Cys-192, His-205, and Cys-214. Residues 243–263 (LLIVLGLVLGALAVVIGLFGL) form a helical membrane-spanning segment.

This sequence belongs to the RBR family. RNF217 subfamily.

The protein localises to the cytoplasm. Its subcellular location is the membrane. The enzyme catalyses [E2 ubiquitin-conjugating enzyme]-S-ubiquitinyl-L-cysteine + [acceptor protein]-L-lysine = [E2 ubiquitin-conjugating enzyme]-L-cysteine + [acceptor protein]-N(6)-ubiquitinyl-L-lysine.. It functions in the pathway protein modification; protein ubiquitination. Its function is as follows. E3 ubiquitin-protein ligase which accepts ubiquitin from E2 ubiquitin-conjugating enzymes in the form of a thioester and then directly transfers the ubiquitin to targeted substrates. Mediates the degradation of the iron exporter ferroportin/SLC40A1 and thus regulates iron homeostasis. In Xenopus laevis (African clawed frog), this protein is E3 ubiquitin-protein ligase RNF217 (rnf217).